The chain runs to 135 residues: Cytochrome b5 (135 aa).

In terms of domain architecture, Cytochrome b5 heme-binding spans serine 4 to aspartate 80. Heme contacts are provided by histidine 39 and histidine 63. The helical transmembrane segment at phenylalanine 106–isoleucine 126 threads the bilayer.

Belongs to the cytochrome b5 family.

It is found in the endoplasmic reticulum membrane. Its subcellular location is the microsome membrane. In terms of biological role, membrane bound hemoprotein which function as an electron carrier for several membrane bound oxygenases. The protein is Cytochrome b5 of Cuscuta reflexa (Southern Asian dodder).